The sequence spans 187 residues: PRA1 family protein G1 (187 aa).

The next 3 membrane-spanning stretches (helical) occupy residues 84–104, 125–145, and 146–166; these read LFLI…AMWL, VIVF…NSLQ, and CLIL…IIRN.

Belongs to the PRA1 family. Expressed in roots and lateral roots.

It localises to the endosome membrane. May be involved in both secretory and endocytic intracellular trafficking in the endosomal/prevacuolar compartments. This Arabidopsis thaliana (Mouse-ear cress) protein is PRA1 family protein G1 (PRA1G1).